Reading from the N-terminus, the 368-residue chain is tRNA-specific 2-thiouridylase MnmA (368 aa).

Residues 14–21 (AMSGGVDS) and leucine 40 each bind ATP. The Nucleophile role is filled by cysteine 108. A disulfide bond links cysteine 108 and cysteine 204. Glycine 132 lines the ATP pocket. The interval 154 to 156 (KDQ) is interaction with tRNA. Cysteine 204 serves as the catalytic Cysteine persulfide intermediate.

The protein belongs to the MnmA/TRMU family.

It localises to the cytoplasm. The catalysed reaction is S-sulfanyl-L-cysteinyl-[protein] + uridine(34) in tRNA + AH2 + ATP = 2-thiouridine(34) in tRNA + L-cysteinyl-[protein] + A + AMP + diphosphate + H(+). Catalyzes the 2-thiolation of uridine at the wobble position (U34) of tRNA, leading to the formation of s(2)U34. The sequence is that of tRNA-specific 2-thiouridylase MnmA from Rickettsia canadensis (strain McKiel).